The chain runs to 290 residues: UPF0761 membrane protein CKO_03126 (290 aa).

The next 6 helical transmembrane spans lie at Leu-44–Phe-64, Val-104–Leu-124, Phe-140–Ile-160, Val-183–Thr-203, Ala-210–Leu-230, and Val-244–Leu-264.

It belongs to the UPF0761 family.

The protein resides in the cell inner membrane. This chain is UPF0761 membrane protein CKO_03126, found in Citrobacter koseri (strain ATCC BAA-895 / CDC 4225-83 / SGSC4696).